Here is a 646-residue protein sequence, read N- to C-terminus: RNA-binding protein RMD9, mitochondrial (646 aa).

The transit peptide at 1–14 (MMLRRNAVRSLKTM) directs the protein to the mitochondrion. A propeptide spans 15–51 (EISVSNVVNSGSIAMLRGKLANVVLSDRTYHSSPIFH) (removed in mature form). One copy of the PPR1 repeat lies at 209–238 (VSGYGATHLLTSFKELSFDDDCIRIWEASK). Residues 251 to 282 (EPKVVGFMLPLLYAKTRSLTEPNELYNQIIQS) form a PPR2 repeat. The stretch at 288–317 (PNLYSGLIKVFIKAEDYEKALSLFGQLCEK) is one PPR3 repeat. Residues 323–353 (YGYLIETHLSFIGDSKNLTLAESFFDKIIND) form a PPR4 repeat. The stretch at 363 to 394 (VSTVNSFLQNIWKAQNDFDHVYRIWEKAVKFY) is one PPR5 repeat. One copy of the PPR6 repeat lies at 401–439 (GILSSLNNTFFTIFFENYINDNINGFRKLQEIITFYSGV). The PPR7 repeat unit spans residues 444–473 (EPFFNVMLTRASIWHERSIIDFIDKNYTLY). One copy of the PPR8 repeat lies at 481 to 514 (SYRILLKSLGSIDNTNNEEILDRWLELVKKLNEL).

It belongs to the RMD9 family. As to quaternary structure, monomer. Post-translationally, phosphorylated. Phosphorylation promotes binding to RNA.

Its subcellular location is the mitochondrion inner membrane. Its function is as follows. Binds the RNA motif 5'-AAUAA[U/C]AUUCUU-3' in the 3'-UTR of mitochondrial mRNAs. Involved in the processing or stability of mitochondrial mRNAs. In Saccharomyces cerevisiae (strain ATCC 204508 / S288c) (Baker's yeast), this protein is RNA-binding protein RMD9, mitochondrial.